Reading from the N-terminus, the 1008-residue chain is MVRTYLLLLLLCGPATPFFNHLMDVTRRLLDSSNATWQRDQPDTHRLSRLDAHVMSMLGVGSHIDEVSVNHSQHLHNFRSYNCEEGRRTLTMMDPKSGKFKRLKCNENQTLSKDCASCIEKKSSIMKSEHLVYDDAICQSDYSSPEAMPDHETHLCRIGPLHIQHCTHEAKRVQHVSWFWIDGKLRVYDDFSVSWTEGKFLSLFDCLNETSKDHNCNKAVCLEGRCSGDLQFCTEFTCSYAKADCNCKRNQVSGVAVVHTKHGSFMPECMGQSLWSVRKPLSKRSVTVQQPCMDCESDCKVDHILVIVRHFYPDHYQACLGSTCLTGRAKDKEFKIPFKMADRLSDSHFEIRIWDKERSNEYFLESRCESVDACAAITCWFCRANWANIHCFSKEQVLILVAVSSLCILLLASVLRALKVIATFTWKIIKPFWWILSLLCRTCSKRLNKRAERLKESIHSLEEGLNNVDEGPREQNNPARAVARPNVRQKMFNLTRLSPVVVGMLCLACPVESCSDSISVTASSQRCSTSSDGVNSCFVSTSSLLQVSPKGQESCLILKGPTGTAVDSIRIKTTDIKLECVRRDLYWVPRVTHRCIGTRRCHLMGACKGEACSEFKINDYSPEWGHEEELMAQLGWSYCVEQCGGALCQCFNMRPSCFYLRKTFSHLSQDAFNIYECSEWSYRINVLVSTNSTHSNLTLKLGVPDSIPHGLISLSSVSQPPAIAYSECFGEDLHGTKFHTVCNRRTDYTLGRIGEIQCPTKADALAVSKRCISSDSIIFSKVHKDSVDCQSSIIDPMTIRNRNKLPSTVGSVTFWPTETSVEAAIPDLASATMLIRLDGYTIQFRSDSNKCSPRFLSLSGCYNCEAGAKLELEHVTDFGTALGILECPSLGYTTYYEVKNTLEKSIRTMHLNGSHVEAKCYFRCPNSESQLTIRGELIYLFNDDIRHHNQTLSPGLSPKSGSGWDPFGWFKASWLRAIWAILGGTVSLIIGVVIIYMVFTLCLKVKKS.

Residues 1 to 17 form the signal peptide; the sequence is MVRTYLLLLLLCGPATP. Residues 18–394 lie on the Lumenal side of the membrane; the sequence is FFNHLMDVTR…NWANIHCFSK (377 aa). 3 N-linked (GlcNAc...) asparagine; by host glycosylation sites follow: N34, N70, and N108. Cystine bridges form between C138–C269, C156–C166, C206–C247, C216–C226, C233–C238, C292–C295, C299–C368, and C319–C324. N208 carries N-linked (GlcNAc...) asparagine; by host glycosylation. The helical transmembrane segment at 395–415 threads the bilayer; it reads EQVLILVAVSSLCILLLASVL. Residues 416–496 lie on the Cytoplasmic side of the membrane; that stretch reads RALKVIATFT…VRQKMFNLTR (81 aa). A golgi retention signal region spans residues 419–465; sequence KVIATFTWKIIKPFWWILSLLCRTCSKRLNKRAERLKESIHSLEEGL. Positions 461 to 465 are important for correct targeting of the glycoproteins to the Golgi complex but not for heterodimerization; sequence LEEGL. An internal signal sequence for glycoprotein C region spans residues 497–513; sequence LSPVVVGMLCLACPVES. 12 disulfide bridges follow: C514/C555, C527/C537, C580/C677, C595/C789, C601/C650, C607/C657, C612/C639, C643/C648, C728/C742, C758/C771, C851/C924, and C861/C864. Topologically, residues 514–977 are lumenal; it reads CSDSISVTAS…GWFKASWLRA (464 aa). Positions 601–607 are fusion loop; that stretch reads CHLMGAC. The tract at residues 644 to 655 is fusion loop; the sequence is GGALCQCFNMRP. 2 N-linked (GlcNAc...) asparagine; by host glycosylation sites follow: N691 and N696. 2 N-linked (GlcNAc...) asparagine; by host glycosylation sites follow: N912 and N949. The helical transmembrane segment at 978–998 threads the bilayer; the sequence is IWAILGGTVSLIIGVVIIYMV. The Cytoplasmic portion of the chain corresponds to 999-1008; sequence FTLCLKVKKS.

This sequence belongs to the phlebovirus envelope glycoprotein family. In terms of assembly, homodimer. Heterodimer with glycoprotein C. Homotrimer (postfusion). As to quaternary structure, heterodimer with glycoprotein N. Homotrimer (postfusion). Specific enzymatic cleavages in vivo yield mature proteins including glycoprotein C and glycoprotein N. In terms of processing, the cytoplasmic tail is Palmitoylated. Post-translationally, glycosylated. Contains principally poly-N-acetyllactosamine glycans. Glycosylated. Contains principally oligomannose-type glycans that can attach to host CD209/DC-SIGN. In terms of processing, palmitoylated.

It localises to the virion membrane. Its subcellular location is the host Golgi apparatus membrane. The protein localises to the host endoplasmic reticulum membrane. Structural component of the virion that interacts with glycoprotein C. It shields the hydrophobic fusion loops of the glycoprotein C, preventing premature fusion. The glycoprotein protrusions are arranged on an icosahedral lattice, with T=12 triangulation. They are able to attach the virion to the host cell receptor CD209/DC-SIGN and to promote fusion of membranes with the late endosome after endocytosis of the virion. Plays a role in the packaging of ribonucleoproteins during virus assembly. Functionally, structural component of the virion that interacts with glycoprotein N. Acts as a class II fusion protein that is activated upon acidification and subsequent repositioning of the glycoprotein N. The glycoprotein protrusions are arranged on an icosahedral lattice, with T=12 triangulation. They are able to attach the virion to the host cell receptor CD209/DC-SIGN and to promote fusion of membranes with the late endosome after endocytosis of the virion. This Homo sapiens (Human) protein is Envelopment polyprotein (GP).